The sequence spans 324 residues: Corticotropin-releasing factor-binding protein (324 aa).

The N-terminal stretch at 1 to 23 (MAPTLKLQCHFILVCLLALRGES) is a signal peptide. 5 cysteine pairs are disulfide-bonded: C62/C83, C106/C143, C185/C207, C239/C266, and C279/C320. N206 carries an N-linked (GlcNAc...) asparagine glycan.

The protein belongs to the CRF-binding protein family.

Its subcellular location is the secreted. In terms of biological role, binds CRF and inactivates it. May prevent inappropriate pituitary-adrenal stimulation in pregnancy. The polypeptide is Corticotropin-releasing factor-binding protein (CRHBP) (Ovis aries (Sheep)).